We begin with the raw amino-acid sequence, 517 residues long: 2-isopropylmalate synthase (517 aa).

In terms of domain architecture, Pyruvate carboxyltransferase spans 5 to 268; that stretch reads IIIFDTTLRD…DTRINTQEIH (264 aa). 4 residues coordinate Mn(2+): Asp14, His202, His204, and Asn238. The tract at residues 393–517 is regulatory domain; the sequence is SLDVITSQTI…ADLKSHKISQ (125 aa).

This sequence belongs to the alpha-IPM synthase/homocitrate synthase family. LeuA type 1 subfamily. Homodimer. Mn(2+) is required as a cofactor.

It is found in the cytoplasm. It catalyses the reaction 3-methyl-2-oxobutanoate + acetyl-CoA + H2O = (2S)-2-isopropylmalate + CoA + H(+). It participates in amino-acid biosynthesis; L-leucine biosynthesis; L-leucine from 3-methyl-2-oxobutanoate: step 1/4. Its function is as follows. Catalyzes the condensation of the acetyl group of acetyl-CoA with 3-methyl-2-oxobutanoate (2-ketoisovalerate) to form 3-carboxy-3-hydroxy-4-methylpentanoate (2-isopropylmalate). The polypeptide is 2-isopropylmalate synthase (Histophilus somni (strain 129Pt) (Haemophilus somnus)).